A 74-amino-acid polypeptide reads, in one-letter code: UPF0154 protein LVIS_1358 (74 aa).

A helical membrane pass occupies residues 4–24 (WIWILIVIVVGLACAAGGFYG).

Belongs to the UPF0154 family.

The protein localises to the cell membrane. The sequence is that of UPF0154 protein LVIS_1358 from Levilactobacillus brevis (strain ATCC 367 / BCRC 12310 / CIP 105137 / JCM 1170 / LMG 11437 / NCIMB 947 / NCTC 947) (Lactobacillus brevis).